The chain runs to 143 residues: Large ribosomal subunit protein uL15 (143 aa).

The tract at residues 1 to 52 (MELNTIQPADGAKHYKRRVGRGIGSGLGKTAGRGHKGQKSRSGGFHKVGFEG) is disordered. The span at 21 to 31 (RGIGSGLGKTA) shows a compositional bias: gly residues.

The protein belongs to the universal ribosomal protein uL15 family. In terms of assembly, part of the 50S ribosomal subunit.

Binds to the 23S rRNA. In Herminiimonas arsenicoxydans, this protein is Large ribosomal subunit protein uL15.